The primary structure comprises 405 residues: Phosphopentomutase (405 aa).

The Mn(2+) site is built by D10, D303, H308, D344, H345, and H356.

The protein belongs to the phosphopentomutase family. Requires Mn(2+) as cofactor.

Its subcellular location is the cytoplasm. The catalysed reaction is 2-deoxy-alpha-D-ribose 1-phosphate = 2-deoxy-D-ribose 5-phosphate. It carries out the reaction alpha-D-ribose 1-phosphate = D-ribose 5-phosphate. It functions in the pathway carbohydrate degradation; 2-deoxy-D-ribose 1-phosphate degradation; D-glyceraldehyde 3-phosphate and acetaldehyde from 2-deoxy-alpha-D-ribose 1-phosphate: step 1/2. Isomerase that catalyzes the conversion of deoxy-ribose 1-phosphate (dRib-1-P) and ribose 1-phosphate (Rib-1-P) to deoxy-ribose 5-phosphate (dRib-5-P) and ribose 5-phosphate (Rib-5-P), respectively. This chain is Phosphopentomutase, found in Shewanella denitrificans (strain OS217 / ATCC BAA-1090 / DSM 15013).